The sequence spans 417 residues: D-glycerate 2-kinase (417 aa).

It belongs to the glycerate kinase type-1 family. In terms of assembly, homodimer. Requires Mg(2+) as cofactor.

The catalysed reaction is (R)-glycerate + ATP = (2R)-2-phosphoglycerate + ADP + H(+). Functionally, involved in the degradation of serine via 3-hydroxypyruvate. Catalyzes the ATP-dependent phosphorylation of D-glycerate to 2-phosphoglycerate. The polypeptide is D-glycerate 2-kinase (Thermotoga maritima (strain ATCC 43589 / DSM 3109 / JCM 10099 / NBRC 100826 / MSB8)).